We begin with the raw amino-acid sequence, 330 residues long: 4-hydroxythreonine-4-phosphate dehydrogenase (330 aa).

Substrate-binding residues include His133 and Thr134. His163, His208, and His263 together coordinate a divalent metal cation. Residues Lys271, Asn280, and Arg289 each coordinate substrate.

The protein belongs to the PdxA family. As to quaternary structure, homodimer. The cofactor is Zn(2+). Mg(2+) is required as a cofactor. Requires Co(2+) as cofactor.

It localises to the cytoplasm. The enzyme catalyses 4-(phosphooxy)-L-threonine + NAD(+) = 3-amino-2-oxopropyl phosphate + CO2 + NADH. It participates in cofactor biosynthesis; pyridoxine 5'-phosphate biosynthesis; pyridoxine 5'-phosphate from D-erythrose 4-phosphate: step 4/5. Functionally, catalyzes the NAD(P)-dependent oxidation of 4-(phosphooxy)-L-threonine (HTP) into 2-amino-3-oxo-4-(phosphooxy)butyric acid which spontaneously decarboxylates to form 3-amino-2-oxopropyl phosphate (AHAP). In Azoarcus sp. (strain BH72), this protein is 4-hydroxythreonine-4-phosphate dehydrogenase.